Consider the following 209-residue polypeptide: Protein GrpE (209 aa).

The segment at 1–63 is disordered; the sequence is MKKSRKKENM…NPEEACREEN (63 aa). 2 stretches are compositionally biased toward basic and acidic residues: residues 7 to 42 and 50 to 63; these read KENM…KVSP and EAEK…REEN.

Belongs to the GrpE family. In terms of assembly, homodimer.

It is found in the cytoplasm. Functionally, participates actively in the response to hyperosmotic and heat shock by preventing the aggregation of stress-denatured proteins, in association with DnaK and GrpE. It is the nucleotide exchange factor for DnaK and may function as a thermosensor. Unfolded proteins bind initially to DnaJ; upon interaction with the DnaJ-bound protein, DnaK hydrolyzes its bound ATP, resulting in the formation of a stable complex. GrpE releases ADP from DnaK; ATP binding to DnaK triggers the release of the substrate protein, thus completing the reaction cycle. Several rounds of ATP-dependent interactions between DnaJ, DnaK and GrpE are required for fully efficient folding. In Methanosarcina mazei (strain ATCC BAA-159 / DSM 3647 / Goe1 / Go1 / JCM 11833 / OCM 88) (Methanosarcina frisia), this protein is Protein GrpE.